Here is a 923-residue protein sequence, read N- to C-terminus: Carnitine O-acetyltransferase YAT2 (923 aa).

Positions 1 to 11 are enriched in polar residues; that stretch reads MSSGSTIVSSD. 2 disordered regions span residues 1 to 21 and 197 to 232; these read MSSG…KHEE and NKPY…KRKH. N-acetylserine is present on Ser2. A compositionally biased stretch (basic and acidic residues) spans 12 to 21; it reads KSGRTFKHEE. Residues 204 to 219 show a composition bias toward acidic residues; sequence DLEDPDYSSDEDDNDE. Positions 220-232 are enriched in basic and acidic residues; that stretch reads PTQKDFDDRKRKH. CoA contacts are provided by residues 529–541 and Ser567; that span reads GRRS…VKPD. Ser576 lines the (R)-carnitine pocket. The interval 763–787 is disordered; it reads NAVNNPPKRNGHTVNGSRKTSSSSQ. Over residues 774–787 the composition is skewed to polar residues; that stretch reads HTVNGSRKTSSSSQ. A Phosphoserine modification is found at Ser783.

This sequence belongs to the carnitine/choline acetyltransferase family.

It localises to the cytoplasm. The enzyme catalyses (R)-carnitine + acetyl-CoA = O-acetyl-(R)-carnitine + CoA. Functionally, carnitine O-acetyltransferase involved in the shutteling of acetyl-CoA in the cell. This Saccharomyces cerevisiae (strain ATCC 204508 / S288c) (Baker's yeast) protein is Carnitine O-acetyltransferase YAT2.